The primary structure comprises 192 residues: Peptide deformylase (192 aa).

Cysteine 108 and histidine 150 together coordinate Fe cation. Glutamate 151 is a catalytic residue. Histidine 154 is a binding site for Fe cation.

It belongs to the polypeptide deformylase family. Fe(2+) serves as cofactor.

It catalyses the reaction N-terminal N-formyl-L-methionyl-[peptide] + H2O = N-terminal L-methionyl-[peptide] + formate. Functionally, removes the formyl group from the N-terminal Met of newly synthesized proteins. Requires at least a dipeptide for an efficient rate of reaction. N-terminal L-methionine is a prerequisite for activity but the enzyme has broad specificity at other positions. The polypeptide is Peptide deformylase (Opitutus terrae (strain DSM 11246 / JCM 15787 / PB90-1)).